The sequence spans 87 residues: Large ribosomal subunit protein bL28 (87 aa).

Belongs to the bacterial ribosomal protein bL28 family.

This chain is Large ribosomal subunit protein bL28, found in Methylacidiphilum infernorum (isolate V4) (Methylokorus infernorum (strain V4)).